The following is a 487-amino-acid chain: Cysteine--tRNA ligase (487 aa).

Position 29 (Cys29) interacts with Zn(2+). The short motif at 31-41 (VTVYDFCHIGH) is the 'HIGH' region element. Zn(2+) contacts are provided by Cys209, His234, and Glu238. Positions 266-270 (KMSKS) match the 'KMSKS' region motif. Lys269 serves as a coordination point for ATP.

This sequence belongs to the class-I aminoacyl-tRNA synthetase family. As to quaternary structure, monomer. The cofactor is Zn(2+).

It localises to the cytoplasm. It catalyses the reaction tRNA(Cys) + L-cysteine + ATP = L-cysteinyl-tRNA(Cys) + AMP + diphosphate. This chain is Cysteine--tRNA ligase, found in Trichlorobacter lovleyi (strain ATCC BAA-1151 / DSM 17278 / SZ) (Geobacter lovleyi).